Here is a 1501-residue protein sequence, read N- to C-terminus: RE1-silencing transcription factor A (1501 aa).

The C2H2-type 1 zinc finger occupies 158–180; the sequence is FRCKPCQYKAESEEEFVHHIKIH. The span at 186–200 shows a compositional bias: basic and acidic residues; the sequence is VDNDSKKNPQGKEAD. The interval 186-209 is disordered; that stretch reads VDNDSKKNPQGKEADSSIPEESDI. C2H2-type zinc fingers lie at residues 214–236, 246–268, 274–296, 302–324, 330–353, 359–381, and 387–410; these read IQCD…LKHH, YKCT…LRNH, YTCS…IRTH, YQCI…MRTH, FKCE…RQVH, LTCP…VELH, and FLCP…KSRH. 4 disordered regions span residues 491–514, 569–612, 885–929, and 1040–1079; these read SSTQ…SRKS, SFVK…SVAS, PTKV…VPGD, and VAAG…GDEQ. Composition is skewed to basic and acidic residues over residues 498 to 512 and 594 to 605; these read KASE…DKSR and ITEKKEKGKQLD. Residues 1067–1079 are compositionally biased toward polar residues; it reads QPTSVQPPGGDEQ. A C2H2-type 9 zinc finger spans residues 1463-1485; the sequence is FVCIFCDRTFRKEEEYTKHLRRH.

Its subcellular location is the nucleus. The protein localises to the cytoplasm. Its function is as follows. Transcriptional repressor which binds neuron-restrictive silencer element (NRSE) and represses neuronal gene transcription in non-neuronal cells. Plays a role in the early development of the nervous system and is required for proper patterning of the neuroectoderm during gastrulation. This involves the correct speciation of the neuroepithelial domain and adequate development of the non-neural ectoderm. The protein is RE1-silencing transcription factor A (rest-a) of Xenopus laevis (African clawed frog).